The chain runs to 726 residues: WD repeat and coiled-coil-containing protein (726 aa).

WD repeat units lie at residues 55–98 (GQFE…LDKN) and 154–194 (KSSG…LNAC). Residues 503–571 (SYDGDQSPTS…SSPPNFIKHG (69 aa)) are disordered. Polar residues predominate over residues 506 to 515 (GDQSPTSSAN). Residues 517 to 535 (FDDKRSKLRVESLDTEPKN) are compositionally biased toward basic and acidic residues. A compositionally biased stretch (polar residues) spans 550–565 (SRPTSPKSECQKSSPP). Positions 581 to 609 (SISRNVERLCCNFAHLQQHLSELTDITRN) form a coiled coil.

In Xenopus tropicalis (Western clawed frog), this protein is WD repeat and coiled-coil-containing protein (wdcp).